The chain runs to 209 residues: Ribosomal RNA large subunit methyltransferase E (209 aa).

Residues G63, W65, D83, D99, and D124 each contribute to the S-adenosyl-L-methionine site. Catalysis depends on K164, which acts as the Proton acceptor.

Belongs to the class I-like SAM-binding methyltransferase superfamily. RNA methyltransferase RlmE family.

Its subcellular location is the cytoplasm. The catalysed reaction is uridine(2552) in 23S rRNA + S-adenosyl-L-methionine = 2'-O-methyluridine(2552) in 23S rRNA + S-adenosyl-L-homocysteine + H(+). In terms of biological role, specifically methylates the uridine in position 2552 of 23S rRNA at the 2'-O position of the ribose in the fully assembled 50S ribosomal subunit. The chain is Ribosomal RNA large subunit methyltransferase E from Photobacterium profundum (strain SS9).